Here is a 710-residue protein sequence, read N- to C-terminus: DNA polymerase epsilon subunit B (710 aa).

The tract at residues 116–167 (FLKRPNSPTDTEITTLSQGSATSVVNPDSHSPMMLEEGSPINSDSEPISEHE) is disordered. Residues 121-144 (NSPTDTEITTLSQGSATSVVNPDS) are compositionally biased toward polar residues.

Belongs to the DNA polymerase epsilon subunit B family. Heterotetramer. Consists of four subunits: POL2, DPB2, DPB3 and DPB4.

The protein localises to the nucleus. In terms of biological role, as accessory component of the DNA polymerase epsilon (DNA polymerase II) participates in chromosomal DNA replication. This chain is DNA polymerase epsilon subunit B (DPB2), found in Kluyveromyces lactis (strain ATCC 8585 / CBS 2359 / DSM 70799 / NBRC 1267 / NRRL Y-1140 / WM37) (Yeast).